A 71-amino-acid polypeptide reads, in one-letter code: Non-structural protein 3x (71 aa).

The polypeptide is Non-structural protein 3x (Canis lupus familiaris (Dog)).